The following is a 348-amino-acid chain: ECA polysaccharide chain length modulation protein (348 aa).

The Cytoplasmic segment spans residues 1-30 (MTQPMPGKPAEDAENELDIRGLFRTLWAGK). A helical transmembrane segment spans residues 31 to 51 (LWIIGMGLAFALIALAYTFFA). Topologically, residues 52-322 (RQEWSSTAIT…EPVKRDSPRR (271 aa)) are periplasmic. A helical transmembrane segment spans residues 323 to 343 (AFLMIMWGIVGGLIGAGVALT). Over 344 to 348 (RRCSK) the chain is Cytoplasmic.

Belongs to the WzzB/Cld/Rol family. As to quaternary structure, homooctamer. Probably part of a complex composed of WzxE, WzyE and WzzE.

It localises to the cell inner membrane. Its pathway is bacterial outer membrane biogenesis; enterobacterial common antigen biosynthesis. Functionally, modulates the polysaccharide chain length of enterobacterial common antigen (ECA). The chain is ECA polysaccharide chain length modulation protein from Escherichia coli O157:H7.